A 208-amino-acid polypeptide reads, in one-letter code: FMN-dependent NADH:quinone oxidoreductase 1 (208 aa).

Residues Ser10, 15-17 (SES), and 97-100 (MWNF) each bind FMN.

Belongs to the azoreductase type 1 family. In terms of assembly, homodimer. FMN serves as cofactor.

It carries out the reaction 2 a quinone + NADH + H(+) = 2 a 1,4-benzosemiquinone + NAD(+). The catalysed reaction is N,N-dimethyl-1,4-phenylenediamine + anthranilate + 2 NAD(+) = 2-(4-dimethylaminophenyl)diazenylbenzoate + 2 NADH + 2 H(+). Its function is as follows. Quinone reductase that provides resistance to thiol-specific stress caused by electrophilic quinones. In terms of biological role, also exhibits azoreductase activity. Catalyzes the reductive cleavage of the azo bond in aromatic azo compounds to the corresponding amines. This chain is FMN-dependent NADH:quinone oxidoreductase 1, found in Bradyrhizobium diazoefficiens (strain JCM 10833 / BCRC 13528 / IAM 13628 / NBRC 14792 / USDA 110).